We begin with the raw amino-acid sequence, 49 residues long: DNA-directed RNA polymerase subunit Rpo12 (49 aa).

Zn(2+) is bound by residues cysteine 11, cysteine 27, and cysteine 30.

The protein belongs to the archaeal Rpo12/eukaryotic RPC10 RNA polymerase subunit family. In terms of assembly, part of the RNA polymerase complex. It depends on Zn(2+) as a cofactor.

It localises to the cytoplasm. The catalysed reaction is RNA(n) + a ribonucleoside 5'-triphosphate = RNA(n+1) + diphosphate. In terms of biological role, DNA-dependent RNA polymerase (RNAP) catalyzes the transcription of DNA into RNA using the four ribonucleoside triphosphates as substrates. The polypeptide is DNA-directed RNA polymerase subunit Rpo12 (Pyrococcus horikoshii (strain ATCC 700860 / DSM 12428 / JCM 9974 / NBRC 100139 / OT-3)).